The sequence spans 483 residues: Proline--tRNA ligase (483 aa).

This sequence belongs to the class-II aminoacyl-tRNA synthetase family. ProS type 3 subfamily. As to quaternary structure, homodimer.

It localises to the cytoplasm. It carries out the reaction tRNA(Pro) + L-proline + ATP = L-prolyl-tRNA(Pro) + AMP + diphosphate. Catalyzes the attachment of proline to tRNA(Pro) in a two-step reaction: proline is first activated by ATP to form Pro-AMP and then transferred to the acceptor end of tRNA(Pro). The chain is Proline--tRNA ligase from Mycoplasma pneumoniae (strain ATCC 29342 / M129 / Subtype 1) (Mycoplasmoides pneumoniae).